Here is a 196-residue protein sequence, read N- to C-terminus: Phosphoheptose isomerase (196 aa).

One can recognise an SIS domain in the interval leucine 34 to glycine 193. A substrate-binding site is contributed by asparagine 49–glycine 51. Zn(2+) contacts are provided by histidine 58 and glutamate 62. Substrate is bound by residues glutamate 62, asparagine 91 to aspartate 92, serine 117 to serine 119, serine 122, and glutamine 169. The Zn(2+) site is built by glutamine 169 and histidine 177.

Belongs to the SIS family. GmhA subfamily. As to quaternary structure, homotetramer. Requires Zn(2+) as cofactor.

It is found in the cytoplasm. It carries out the reaction 2 D-sedoheptulose 7-phosphate = D-glycero-alpha-D-manno-heptose 7-phosphate + D-glycero-beta-D-manno-heptose 7-phosphate. It participates in carbohydrate biosynthesis; D-glycero-D-manno-heptose 7-phosphate biosynthesis; D-glycero-alpha-D-manno-heptose 7-phosphate and D-glycero-beta-D-manno-heptose 7-phosphate from sedoheptulose 7-phosphate: step 1/1. Functionally, catalyzes the isomerization of sedoheptulose 7-phosphate in D-glycero-D-manno-heptose 7-phosphate. The chain is Phosphoheptose isomerase from Trichlorobacter lovleyi (strain ATCC BAA-1151 / DSM 17278 / SZ) (Geobacter lovleyi).